The sequence spans 50 residues: Photosystem II reaction center protein M (50 aa).

The chain crosses the membrane as a helical span at residues 7 to 27 (GFIASLLFVGVPTIFLIGLFI).

The protein belongs to the PsbM family. As to quaternary structure, PSII is composed of 1 copy each of membrane proteins PsbA, PsbB, PsbC, PsbD, PsbE, PsbF, PsbH, PsbI, PsbJ, PsbK, PsbL, PsbM, PsbT, PsbX, PsbY, Psb30/Ycf12, peripheral proteins PsbO, CyanoQ (PsbQ), PsbU, PsbV and a large number of cofactors. It forms dimeric complexes.

The protein resides in the cellular thylakoid membrane. Its function is as follows. One of the components of the core complex of photosystem II (PSII). PSII is a light-driven water:plastoquinone oxidoreductase that uses light energy to abstract electrons from H(2)O, generating O(2) and a proton gradient subsequently used for ATP formation. It consists of a core antenna complex that captures photons, and an electron transfer chain that converts photonic excitation into a charge separation. This subunit is found at the monomer-monomer interface. The protein is Photosystem II reaction center protein M of Prochlorococcus marinus (strain MIT 9312).